The chain runs to 334 residues: Dual specificity mitogen-activated protein kinase kinase 6 (334 aa).

A compositionally biased stretch (basic residues) spans Met1–Pro11. The interval Met1 to Asp34 is disordered. The d domain stretch occupies residues Ser4–Ala19. The Protein kinase domain maps to Leu53–Phe314. ATP is bound by residues Leu59–Val67 and Lys82. Residue Asp179 is the Proton acceptor of the active site. Ser207 is subject to (Microbial infection) O-acetylserine; by Yersinia YopJ; alternate. Ser207 is subject to Phosphoserine; by MAP3K; alternate. Thr211 is subject to (Microbial infection) O-acetylthreonine; by Yersinia YopJ; alternate. A Phosphothreonine; by MAP3K; alternate modification is found at Thr211. Residues His311–Asp334 form a DVD domain region.

Belongs to the protein kinase superfamily. STE Ser/Thr protein kinase family. MAP kinase kinase subfamily. In terms of assembly, dimer. Interacts (via its D domain) with its substrates MAPK11, MAPK12, MAPK13 and MAPK14. Interacts (via its DVD domain) with MAP3Ks activators like MAP3K5/ASK1, MAP3K1/MEKK1, MAP3K2/MEKK2, MAP3K3/MEKK3, MAP3K4/MEKK4, MAP3K7/TAK1, MAP3K11/MLK3 and MAP3K17/TAOK2. Interacts with DCTN1. Interacts with EIF2AK2/PKR. As to quaternary structure, (Microbial infection) Interacts with Yersinia YopJ. Weakly autophosphorylated. Phosphorylated at Ser-207 and Thr-211 by the majority of M3Ks, such as MAP3K5/ASK1, MAP3K1/MEKK1, MAP3K2/MEKK2, MAP3K3/MEKK3, MAP3K4/MEKK4, MAP3K7/TAK1, MAP3K11/MLK3 and MAP3K17/TAOK2. Post-translationally, in response to genotoxic stress, MAP3K-phosphorylated MAP2K6 is ubiquitinated and degraded by the SCF(FBXO31) complex. In terms of processing, (Microbial infection) Acetylation of Ser-207 and Thr-211 by Yersinia YopJ prevents phosphorylation and activation, thus blocking the MAPK signaling pathway. Isoform 2 is only expressed in skeletal muscle. Isoform 1 is expressed in skeletal muscle, heart, and in lesser extent in liver or pancreas.

It localises to the nucleus. Its subcellular location is the cytoplasm. The protein resides in the cytoskeleton. It carries out the reaction L-seryl-[protein] + ATP = O-phospho-L-seryl-[protein] + ADP + H(+). The catalysed reaction is L-threonyl-[protein] + ATP = O-phospho-L-threonyl-[protein] + ADP + H(+). It catalyses the reaction L-tyrosyl-[protein] + ATP = O-phospho-L-tyrosyl-[protein] + ADP + H(+). With respect to regulation, activated by dual phosphorylation on Ser-207 and Thr-211 in response to a variety of cellular stresses, including UV radiation, osmotic shock, hypoxia, inflammatory cytokines, interferon gamma (IFNG), and less often by growth factors. MAP2K6/MKK6 is activated by the majority of M3Ks, such as MAP3K5/ASK1, MAP3K1/MEKK1, MAP3K2/MEKK2, MAP3K3/MEKK3, MAP3K4/MEKK4, MAP3K7/TAK1, MAP3K11/MLK3 and MAP3K17/TAOK2. Its function is as follows. Dual specificity protein kinase which acts as an essential component of the MAP kinase signal transduction pathway. With MAP3K3/MKK3, catalyzes the concomitant phosphorylation of a threonine and a tyrosine residue in the MAP kinases p38 MAPK11, MAPK12, MAPK13 and MAPK14 and plays an important role in the regulation of cellular responses to cytokines and all kinds of stresses. Especially, MAP2K3/MKK3 and MAP2K6/MKK6 are both essential for the activation of MAPK11 and MAPK13 induced by environmental stress, whereas MAP2K6/MKK6 is the major MAPK11 activator in response to TNF. MAP2K6/MKK6 also phosphorylates and activates PAK6. The p38 MAP kinase signal transduction pathway leads to direct activation of transcription factors. Nuclear targets of p38 MAP kinase include the transcription factors ATF2 and ELK1. Within the p38 MAPK signal transduction pathway, MAP3K6/MKK6 mediates phosphorylation of STAT4 through MAPK14 activation, and is therefore required for STAT4 activation and STAT4-regulated gene expression in response to IL-12 stimulation. The pathway is also crucial for IL-6-induced SOCS3 expression and down-regulation of IL-6-mediated gene induction; and for IFNG-dependent gene transcription. Has a role in osteoclast differentiation through NF-kappa-B transactivation by TNFSF11, and in endochondral ossification and since SOX9 is another likely downstream target of the p38 MAPK pathway. MAP2K6/MKK6 mediates apoptotic cell death in thymocytes. Acts also as a regulator for melanocytes dendricity, through the modulation of Rho family GTPases. The protein is Dual specificity mitogen-activated protein kinase kinase 6 (MAP2K6) of Homo sapiens (Human).